The sequence spans 159 residues: 2-C-methyl-D-erythritol 2,4-cyclodiphosphate synthase (159 aa).

Residues aspartate 10 and histidine 12 each contribute to the a divalent metal cation site. Residues 10-12 (DVH) and 37-38 (HS) contribute to the 4-CDP-2-C-methyl-D-erythritol 2-phosphate site. Histidine 45 serves as a coordination point for a divalent metal cation. Residues 59 to 61 (DIG), 64 to 68 (FLDTD), 103 to 109 (AQAPKML), 135 to 138 (TTTE), phenylalanine 142, and arginine 145 contribute to the 4-CDP-2-C-methyl-D-erythritol 2-phosphate site.

Belongs to the IspF family. As to quaternary structure, homotrimer. A divalent metal cation is required as a cofactor.

The enzyme catalyses 4-CDP-2-C-methyl-D-erythritol 2-phosphate = 2-C-methyl-D-erythritol 2,4-cyclic diphosphate + CMP. It participates in isoprenoid biosynthesis; isopentenyl diphosphate biosynthesis via DXP pathway; isopentenyl diphosphate from 1-deoxy-D-xylulose 5-phosphate: step 4/6. Its function is as follows. Involved in the biosynthesis of isopentenyl diphosphate (IPP) and dimethylallyl diphosphate (DMAPP), two major building blocks of isoprenoid compounds. Catalyzes the conversion of 4-diphosphocytidyl-2-C-methyl-D-erythritol 2-phosphate (CDP-ME2P) to 2-C-methyl-D-erythritol 2,4-cyclodiphosphate (ME-CPP) with a corresponding release of cytidine 5-monophosphate (CMP). In Francisella tularensis subsp. tularensis (strain FSC 198), this protein is 2-C-methyl-D-erythritol 2,4-cyclodiphosphate synthase.